The primary structure comprises 465 residues: Hexokinase-4 (465 aa).

A Hexokinase domain is found at 10 to 454 (AAKKEKVEQI…SGRGAALVSA (445 aa)). The hexokinase small subdomain stretch occupies residues 67–203 (EGSEVGDFLS…DFEMDVVAMV (137 aa)). 78–83 (DLGGTN) provides a ligand contact to ATP. Substrate-binding positions include 151–152 (SF), 168–169 (TK), and 204–205 (ND). The hexokinase large subdomain stretch occupies residues 204-443 (NDTVATMISC…CEITFIESEE (240 aa)). Thr228 is a binding site for ATP. Positions 231, 256, and 290 each coordinate substrate. Residues 295–296 (GK), 332–336 (TRFVS), and 411–415 (SVYKL) contribute to the ATP site.

The protein belongs to the hexokinase family. Monomer. Interacts with MIDN; the interaction occurs preferentially at low glucose levels and results in inhibition of hexokinase activity. Interacts with GCKR; leading to sequestration in the nucleus.

The protein resides in the cytoplasm. It localises to the nucleus. Its subcellular location is the mitochondrion. It catalyses the reaction a D-hexose + ATP = a D-hexose 6-phosphate + ADP + H(+). The enzyme catalyses D-fructose + ATP = D-fructose 6-phosphate + ADP + H(+). The catalysed reaction is D-glucose + ATP = D-glucose 6-phosphate + ADP + H(+). It carries out the reaction D-mannose + ATP = D-mannose 6-phosphate + ADP + H(+). Its pathway is carbohydrate metabolism; hexose metabolism. It functions in the pathway carbohydrate degradation; glycolysis; D-glyceraldehyde 3-phosphate and glycerone phosphate from D-glucose: step 1/4. Subject to allosteric regulation. Low glucose and high fructose-6-phosphate triggers association with the inhibitor GCKR followed by sequestration in the nucleus. Catalyzes the phosphorylation of hexose, such as D-glucose, D-fructose and D-mannose, to hexose 6-phosphate (D-glucose 6-phosphate, D-fructose 6-phosphate and D-mannose 6-phosphate, respectively). Compared to other hexokinases, has a weak affinity for D-glucose, and is effective only when glucose is abundant. Mainly expressed in pancreatic beta cells and the liver and constitutes a rate-limiting step in glucose metabolism in these tissues. Since insulin secretion parallels glucose metabolism and the low glucose affinity of GCK ensures that it can change its enzymatic activity within the physiological range of glucose concentrations, GCK acts as a glucose sensor in the pancreatic beta cell. In pancreas, plays an important role in modulating insulin secretion. In liver, helps to facilitate the uptake and conversion of glucose by acting as an insulin-sensitive determinant of hepatic glucose usage. Required to provide D-glucose 6-phosphate for the synthesis of glycogen. Mediates the initial step of glycolysis by catalyzing phosphorylation of D-glucose to D-glucose 6-phosphate. The polypeptide is Hexokinase-4 (Homo sapiens (Human)).